A 180-amino-acid polypeptide reads, in one-letter code: Adenine phosphoribosyltransferase (180 aa).

The protein belongs to the purine/pyrimidine phosphoribosyltransferase family. As to quaternary structure, homodimer.

Its subcellular location is the cytoplasm. It carries out the reaction AMP + diphosphate = 5-phospho-alpha-D-ribose 1-diphosphate + adenine. The protein operates within purine metabolism; AMP biosynthesis via salvage pathway; AMP from adenine: step 1/1. Functionally, catalyzes a salvage reaction resulting in the formation of AMP, that is energically less costly than de novo synthesis. The protein is Adenine phosphoribosyltransferase of Mycolicibacterium paratuberculosis (strain ATCC BAA-968 / K-10) (Mycobacterium paratuberculosis).